The chain runs to 942 residues: Leucine--tRNA ligase 1 (942 aa).

The short motif at 39-49 (PYTNSPLHIGH) is the 'HIGH' region element. The short motif at 624 to 628 (KMSKS) is the 'KMSKS' region element. ATP is bound at residue lysine 627.

This sequence belongs to the class-I aminoacyl-tRNA synthetase family.

The protein localises to the cytoplasm. The enzyme catalyses tRNA(Leu) + L-leucine + ATP = L-leucyl-tRNA(Leu) + AMP + diphosphate. The sequence is that of Leucine--tRNA ligase 1 from Sulfolobus acidocaldarius (strain ATCC 33909 / DSM 639 / JCM 8929 / NBRC 15157 / NCIMB 11770).